Consider the following 225-residue polypeptide: UPF0758 protein XCV4028 (225 aa).

Residues 102-224 enclose the MPN domain; sequence ALSDPPSVGR…PVSFAERGWL (123 aa). Histidine 173, histidine 175, and aspartate 186 together coordinate Zn(2+). A JAMM motif motif is present at residues 173 to 186; it reads HNHPSGNPEPSEAD.

This sequence belongs to the UPF0758 family.

The sequence is that of UPF0758 protein XCV4028 from Xanthomonas euvesicatoria pv. vesicatoria (strain 85-10) (Xanthomonas campestris pv. vesicatoria).